A 355-amino-acid chain; its full sequence is Probable dual-specificity RNA methyltransferase RlmN (355 aa).

The segment at 1 to 20 is disordered; that stretch reads MSATPVTQLTPSSQPQQPCS. Residue glutamate 107 is the Proton acceptor of the active site. Residues 113 to 341 form the Radical SAM core domain; that stretch reads TDKRLTVCVS…VSVRYSRGLE (229 aa). Cysteine 120 and cysteine 346 are disulfide-bonded. [4Fe-4S] cluster-binding residues include cysteine 127, cysteine 131, and cysteine 134. S-adenosyl-L-methionine is bound by residues 174 to 175, serine 204, 227 to 229, and asparagine 303; these read GE and SLH. Cysteine 346 functions as the S-methylcysteine intermediate in the catalytic mechanism.

It belongs to the radical SAM superfamily. RlmN family. [4Fe-4S] cluster is required as a cofactor.

It is found in the cytoplasm. The enzyme catalyses adenosine(2503) in 23S rRNA + 2 reduced [2Fe-2S]-[ferredoxin] + 2 S-adenosyl-L-methionine = 2-methyladenosine(2503) in 23S rRNA + 5'-deoxyadenosine + L-methionine + 2 oxidized [2Fe-2S]-[ferredoxin] + S-adenosyl-L-homocysteine. It carries out the reaction adenosine(37) in tRNA + 2 reduced [2Fe-2S]-[ferredoxin] + 2 S-adenosyl-L-methionine = 2-methyladenosine(37) in tRNA + 5'-deoxyadenosine + L-methionine + 2 oxidized [2Fe-2S]-[ferredoxin] + S-adenosyl-L-homocysteine. Functionally, specifically methylates position 2 of adenine 2503 in 23S rRNA and position 2 of adenine 37 in tRNAs. In Nostoc sp. (strain PCC 7120 / SAG 25.82 / UTEX 2576), this protein is Probable dual-specificity RNA methyltransferase RlmN.